The chain runs to 308 residues: Transaldolase (308 aa).

Lys-125 acts as the Schiff-base intermediate with substrate in catalysis.

The protein belongs to the transaldolase family. Type 1 subfamily. As to quaternary structure, homodimer.

It is found in the cytoplasm. The enzyme catalyses D-sedoheptulose 7-phosphate + D-glyceraldehyde 3-phosphate = D-erythrose 4-phosphate + beta-D-fructose 6-phosphate. Its pathway is carbohydrate degradation; pentose phosphate pathway; D-glyceraldehyde 3-phosphate and beta-D-fructose 6-phosphate from D-ribose 5-phosphate and D-xylulose 5-phosphate (non-oxidative stage): step 2/3. Functionally, transaldolase is important for the balance of metabolites in the pentose-phosphate pathway. This chain is Transaldolase, found in Pseudomonas fluorescens (strain ATCC BAA-477 / NRRL B-23932 / Pf-5).